A 207-amino-acid chain; its full sequence is Small ribosomal subunit protein uS4A (207 aa).

One can recognise an S4 RNA-binding domain in the interval 98 to 158 (TRLDNVAYRL…EKSKSSAKFK (61 aa)).

This sequence belongs to the universal ribosomal protein uS4 family. Part of the 30S ribosomal subunit. Contacts protein S5. The interaction surface between S4 and S5 is involved in control of translational fidelity.

Functionally, one of the primary rRNA binding proteins, it binds directly to 16S rRNA where it nucleates assembly of the body of the 30S subunit. Its function is as follows. With S5 and S12 plays an important role in translational accuracy. The polypeptide is Small ribosomal subunit protein uS4A (Alkaliphilus oremlandii (strain OhILAs) (Clostridium oremlandii (strain OhILAs))).